A 299-amino-acid polypeptide reads, in one-letter code: tRNA dimethylallyltransferase (299 aa).

13-20 is a binding site for ATP; the sequence is GPTASGKT. A substrate-binding site is contributed by 15 to 20; sequence TASGKT. An interaction with substrate tRNA region spans residues 38 to 41; that stretch reads DSRQ.

Belongs to the IPP transferase family. As to quaternary structure, monomer. Mg(2+) is required as a cofactor.

The catalysed reaction is adenosine(37) in tRNA + dimethylallyl diphosphate = N(6)-dimethylallyladenosine(37) in tRNA + diphosphate. Catalyzes the transfer of a dimethylallyl group onto the adenine at position 37 in tRNAs that read codons beginning with uridine, leading to the formation of N6-(dimethylallyl)adenosine (i(6)A). The protein is tRNA dimethylallyltransferase of Prochlorococcus marinus subsp. pastoris (strain CCMP1986 / NIES-2087 / MED4).